Consider the following 342-residue polypeptide: GTPase Obg (342 aa).

The region spanning 1 to 159 (MQFIDRAEIE…RHLRLELKLL (159 aa)) is the Obg domain. Positions 160–328 (AEVGIIGLPN…LLAKVWQQLE (169 aa)) constitute an OBG-type G domain. GTP-binding positions include 166 to 173 (GLPNAGKS), 191 to 195 (FTTLI), 213 to 216 (DIPG), 280 to 283 (NKID), and 309 to 311 (SAV). Serine 173 and threonine 193 together coordinate Mg(2+).

This sequence belongs to the TRAFAC class OBG-HflX-like GTPase superfamily. OBG GTPase family. In terms of assembly, monomer. Mg(2+) is required as a cofactor.

The protein localises to the cytoplasm. Functionally, an essential GTPase which binds GTP, GDP and possibly (p)ppGpp with moderate affinity, with high nucleotide exchange rates and a fairly low GTP hydrolysis rate. Plays a role in control of the cell cycle, stress response, ribosome biogenesis and in those bacteria that undergo differentiation, in morphogenesis control. This chain is GTPase Obg, found in Microcystis aeruginosa (strain NIES-843 / IAM M-2473).